The chain runs to 145 residues: Basic phospholipase A2 PC16 (145 aa).

The first 21 residues, 1 to 21 (MYPAHLLLLLAVCVSLLGASA), serve as a signal peptide directing secretion. A propeptide spanning residues 22–27 (IPPLPL) is cleaved from the precursor. 7 disulfides stabilise this stretch: Cys38/Cys98, Cys54/Cys144, Cys56/Cys72, Cys71/Cys125, Cys78/Cys118, Cys87/Cys111, and Cys105/Cys116. Tyr55, Gly57, and Gly59 together coordinate Ca(2+). His75 is a catalytic residue. Asp76 contributes to the Ca(2+) binding site. Asp119 is a catalytic residue.

The protein belongs to the phospholipase A2 family. Group I subfamily. D49 sub-subfamily. It depends on Ca(2+) as a cofactor.

It localises to the secreted. It carries out the reaction a 1,2-diacyl-sn-glycero-3-phosphocholine + H2O = a 1-acyl-sn-glycero-3-phosphocholine + a fatty acid + H(+). Its function is as follows. PLA2 catalyzes the calcium-dependent hydrolysis of the 2-acyl groups in 3-sn-phosphoglycerides. This chain is Basic phospholipase A2 PC16, found in Laticauda laticaudata (Blue-ringed sea krait).